The primary structure comprises 357 residues: Holliday junction branch migration complex subunit RuvB (357 aa).

Residues 1–20 (MDDHDDSPVSPSFLKSDGEI) are disordered. The tract at residues 1–185 (MDDHDDSPVS…FGFTGHMDFY (185 aa)) is large ATPase domain (RuvB-L). Residues L24, R25, G66, K69, T70, S71, 132–134 (EDF), R175, Y185, and R222 each bind ATP. Residue T70 coordinates Mg(2+). The segment at 186 to 256 (EPGELLRILE…VARAALEVYD (71 aa)) is small ATPAse domain (RuvB-S). The interval 259–357 (TLGLDRLDRA…TSQPTLDLFD (99 aa)) is head domain (RuvB-H). R314 and R319 together coordinate DNA.

The protein belongs to the RuvB family. Homohexamer. Forms an RuvA(8)-RuvB(12)-Holliday junction (HJ) complex. HJ DNA is sandwiched between 2 RuvA tetramers; dsDNA enters through RuvA and exits via RuvB. An RuvB hexamer assembles on each DNA strand where it exits the tetramer. Each RuvB hexamer is contacted by two RuvA subunits (via domain III) on 2 adjacent RuvB subunits; this complex drives branch migration. In the full resolvosome a probable DNA-RuvA(4)-RuvB(12)-RuvC(2) complex forms which resolves the HJ.

It localises to the cytoplasm. It carries out the reaction ATP + H2O = ADP + phosphate + H(+). In terms of biological role, the RuvA-RuvB-RuvC complex processes Holliday junction (HJ) DNA during genetic recombination and DNA repair, while the RuvA-RuvB complex plays an important role in the rescue of blocked DNA replication forks via replication fork reversal (RFR). RuvA specifically binds to HJ cruciform DNA, conferring on it an open structure. The RuvB hexamer acts as an ATP-dependent pump, pulling dsDNA into and through the RuvAB complex. RuvB forms 2 homohexamers on either side of HJ DNA bound by 1 or 2 RuvA tetramers; 4 subunits per hexamer contact DNA at a time. Coordinated motions by a converter formed by DNA-disengaged RuvB subunits stimulates ATP hydrolysis and nucleotide exchange. Immobilization of the converter enables RuvB to convert the ATP-contained energy into a lever motion, pulling 2 nucleotides of DNA out of the RuvA tetramer per ATP hydrolyzed, thus driving DNA branch migration. The RuvB motors rotate together with the DNA substrate, which together with the progressing nucleotide cycle form the mechanistic basis for DNA recombination by continuous HJ branch migration. Branch migration allows RuvC to scan DNA until it finds its consensus sequence, where it cleaves and resolves cruciform DNA. This Nocardia farcinica (strain IFM 10152) protein is Holliday junction branch migration complex subunit RuvB.